We begin with the raw amino-acid sequence, 339 residues long: Ketol-acid reductoisomerase (NADP(+)) (339 aa).

Residues 1–182 form the KARI N-terminal Rossmann domain; the sequence is MRVYYDRDAD…GGGRSGIIET (182 aa). NADP(+) contacts are provided by residues 24–27, Lys-48, Ser-51, Thr-53, and 83–86; these read YGSQ and DELQ. His-108 is a catalytic residue. Residue Gly-134 participates in NADP(+) binding. Positions 183–328 constitute a KARI C-terminal knotted domain; sequence NFKEECETDL…AKLRGMMPWI (146 aa). Mg(2+) contacts are provided by Asp-191, Glu-195, Glu-227, and Glu-231. Ser-252 provides a ligand contact to substrate.

This sequence belongs to the ketol-acid reductoisomerase family. Mg(2+) is required as a cofactor.

The enzyme catalyses (2R)-2,3-dihydroxy-3-methylbutanoate + NADP(+) = (2S)-2-acetolactate + NADPH + H(+). It catalyses the reaction (2R,3R)-2,3-dihydroxy-3-methylpentanoate + NADP(+) = (S)-2-ethyl-2-hydroxy-3-oxobutanoate + NADPH + H(+). It functions in the pathway amino-acid biosynthesis; L-isoleucine biosynthesis; L-isoleucine from 2-oxobutanoate: step 2/4. It participates in amino-acid biosynthesis; L-valine biosynthesis; L-valine from pyruvate: step 2/4. In terms of biological role, involved in the biosynthesis of branched-chain amino acids (BCAA). Catalyzes an alkyl-migration followed by a ketol-acid reduction of (S)-2-acetolactate (S2AL) to yield (R)-2,3-dihydroxy-isovalerate. In the isomerase reaction, S2AL is rearranged via a Mg-dependent methyl migration to produce 3-hydroxy-3-methyl-2-ketobutyrate (HMKB). In the reductase reaction, this 2-ketoacid undergoes a metal-dependent reduction by NADPH to yield (R)-2,3-dihydroxy-isovalerate. This is Ketol-acid reductoisomerase (NADP(+)) from Agrobacterium fabrum (strain C58 / ATCC 33970) (Agrobacterium tumefaciens (strain C58)).